Reading from the N-terminus, the 160-residue chain is Cathelin-related peptide SC5 (160 aa).

Positions 1 to 29 are cleaved as a signal peptide; that stretch reads METQRASLSLGRCSLWLLLLGLALPSASA. Residues 30–131 constitute a propeptide that is removed on maturation; the sequence is QVLSYREAVL…DITCAEPQSV (102 aa). 2 cysteine pairs are disulfide-bonded: C86/C97 and C108/C125.

The protein belongs to the cathelicidin family.

It localises to the secreted. Broad spectrum bactericidal agent. In Ovis aries (Sheep), this protein is Cathelin-related peptide SC5.